A 570-amino-acid polypeptide reads, in one-letter code: Double-stranded RNA-binding protein Staufen homolog 2 (570 aa).

Residues 8–75 (TAMCLVNELA…ANKALTESTL (68 aa)) form the DRBM 1 domain. Disordered stretches follow at residues 71-94 (TESTLPKPVQKPPKSNVNNNPGSI) and 181-203 (NEPIPERSPQNGESGKDVDDDKD). Positions 83 to 94 (PKSNVNNNPGSI) are enriched in polar residues. The 87-residue stretch at 95-181 (TPTVELNGLA…AMKALQALQN (87 aa)) folds into the DRBM 2 domain. The residue at position 188 (Ser-188) is a Phosphoserine. A compositionally biased stretch (basic and acidic residues) spans 194–203 (SGKDVDDDKD). 2 consecutive DRBM domains span residues 207-274 (SEIS…ELKK) and 307-375 (NPIS…QLGY). 2 consecutive short sequence motifs (nuclear localization signal) follow at residues 273 to 291 (KKLPPLPVVEKPKLFFKKR) and 373 to 412 (LGYKASTNLQDQLEKTGENKGWSGPKPGFPEPTNNTPKGI). The segment at 381–570 (LQDQLEKTGE…QDCKKSNSAV (190 aa)) is required for dendritic transport. A disordered region spans residues 387 to 409 (KTGENKGWSGPKPGFPEPTNNTP). Ser-395 bears the Phosphoserine mark. Residue Thr-405 is modified to Phosphothreonine. A phosphoserine mark is found at Ser-416, Ser-426, Ser-440, Ser-455, and Ser-492. The segment at 528–570 (DGAMNIEKGSLEKQAKHLREKADNNQAPPGSIAQDCKKSNSAV) is disordered. Basic and acidic residues predominate over residues 536–550 (GSLEKQAKHLREKAD).

Interacts with the exportin XPO5. This requires RNA and RAN bound to GTP. Interacts with microtubules. Isoform 2 and isoform 3 may also interact with ribosomes, and this association is independent of translation. Identified in a mRNP complex, at least composed of DHX9, DDX3X, ELAVL1, HNRNPU, IGF2BP1, ILF3, PABPC1, PCBP2, PTBP2, STAU1, STAU2, SYNCRIP and YBX1. Interacts with TRIM71 (via NHL repeats) in an RNA-dependent manner.

It is found in the cytoplasm. The protein resides in the nucleus. The protein localises to the nucleolus. Its subcellular location is the endoplasmic reticulum. RNA-binding protein required for the microtubule-dependent transport of neuronal RNA from the cell body to the dendrite. As protein synthesis occurs within the dendrite, the localization of specific mRNAs to dendrites may be a prerequisite for neurite outgrowth and plasticity at sites distant from the cell body. The chain is Double-stranded RNA-binding protein Staufen homolog 2 (STAU2) from Homo sapiens (Human).